We begin with the raw amino-acid sequence, 283 residues long: Nucleoid occlusion protein (283 aa).

The segment at residues 148 to 167 is a DNA-binding region (H-T-H motif); the sequence is EALAQRLGKGQSTIANKLRL.

This sequence belongs to the ParB family.

It is found in the cytoplasm. It localises to the nucleoid. Effects nucleoid occlusion by binding relatively nonspecifically to DNA and preventing the assembly of the division machinery in the vicinity of the nucleoid, especially under conditions that disturb the cell cycle. It helps to coordinate cell division and chromosome segregation by preventing the formation of the Z ring through the nucleoid, which would cause chromosome breakage. In Bacillus subtilis (strain 168), this protein is Nucleoid occlusion protein (noc).